We begin with the raw amino-acid sequence, 279 residues long: Single-strand selective monofunctional uracil DNA glycosylase (279 aa).

3 residues coordinate substrate: methionine 86, phenylalanine 100, and asparagine 165. The DNA-binding stretch occupies residues 175 to 189; it reads SGRNLTPAELPAKQR. Histidine 241 is a substrate binding site.

Belongs to the uracil-DNA glycosylase (UDG) superfamily. SMUG1 family.

It is found in the nucleus. In terms of biological role, recognizes base lesions in the genome and initiates base excision DNA repair. Acts as a monofunctional DNA glycosylase specific for uracil (U) residues in DNA with a preference for single-stranded DNA substrates. The activity is greater toward mismatches (U/G) compared to matches (U/A). Excises uracil (U), 5-formyluracil (fU) and uracil derivatives bearing an oxidized group at C5 [5-hydroxyuracil (hoU) and 5-hydroxymethyluracil (hmU)] in ssDNA and dsDNA, but not analogous cytosine derivatives (5-hydroxycytosine and 5-formylcytosine), nor other oxidized bases. The activity is damage-specific and salt-dependent. The substrate preference is the following: ssDNA &gt; dsDNA (G pair) = dsDNA (A pair) at low salt concentration, and dsDNA (G pair) &gt; dsDNA (A pair) &gt; ssDNA at high salt concentration. In Mus musculus (Mouse), this protein is Single-strand selective monofunctional uracil DNA glycosylase (Smug1).